Here is a 499-residue protein sequence, read N- to C-terminus: Glycerol kinase (499 aa).

Residue T13 participates in ADP binding. T13, T14, and S15 together coordinate ATP. Residue T13 coordinates sn-glycerol 3-phosphate. Residue R17 participates in ADP binding. R83, E84, Y135, and D245 together coordinate sn-glycerol 3-phosphate. Positions 83, 84, 135, 245, and 246 each coordinate glycerol. ADP is bound by residues T267 and G310. ATP contacts are provided by T267, G310, Q314, and G411. Positions 411 and 415 each coordinate ADP.

It belongs to the FGGY kinase family.

The catalysed reaction is glycerol + ATP = sn-glycerol 3-phosphate + ADP + H(+). Its pathway is polyol metabolism; glycerol degradation via glycerol kinase pathway; sn-glycerol 3-phosphate from glycerol: step 1/1. Its activity is regulated as follows. Inhibited by fructose 1,6-bisphosphate (FBP). Functionally, key enzyme in the regulation of glycerol uptake and metabolism. Catalyzes the phosphorylation of glycerol to yield sn-glycerol 3-phosphate. This chain is Glycerol kinase, found in Stenotrophomonas maltophilia (strain R551-3).